Reading from the N-terminus, the 516-residue chain is uncharacterized protein (516 aa).

The tract at residues M1–E35 is disordered. Positions D16–Y28 are enriched in basic and acidic residues. The residue at position 31 (S31) is a Phosphoserine. The next 12 membrane-spanning stretches (helical) occupy residues V77–A97, V111–A131, M143–I163, V166–G186, G198–V218, W231–H251, L301–I321, S345–F365, L386–T406, I412–F432, I439–F461, and A481–L501.

This sequence belongs to the major facilitator superfamily.

Its subcellular location is the membrane. This is an uncharacterized protein from Schizosaccharomyces pombe (strain 972 / ATCC 24843) (Fission yeast).